The primary structure comprises 453 residues: Vacuolar cation/proton exchanger 1b (453 aa).

Residues 1–67 (MPVSRMMMES…LRSLLANLND (67 aa)) are Cytoplasmic-facing. A helical membrane pass occupies residues 68–85 (VLLTTRLFLLFPAVLLAI). Topologically, residues 86–91 (AATYLH) are extracellular. Residues 92 to 109 (FGQVWVFVLSLIGLVPLA) form a helical membrane-spanning segment. The Cytoplasmic segment spans residues 110–126 (ERLSFLTEQIAFYTGPT). The chain crosses the membrane as a helical span at residues 127 to 147 (VGGLLNATFGNVTEVIIALLA). Residues 136 to 171 (GNVTEVIIALLALREGKIEVVKCSLLGSILSNLLLV) form a cation selection region. Over 148–160 (LREGKIEVVKCSL) the chain is Extracellular. A helical transmembrane segment spans residues 161-181 (LGSILSNLLLVLGTSLFLAGI). Residues 182 to 194 (ANLRAHQPYDTKQ) are Cytoplasmic-facing. Residues 195-215 (AHVNTALLMLAVLCHSLPLML) form a helical membrane-spanning segment. Topologically, residues 216–232 (RYAVTSGDHAIVSGDAA) are extracellular. The helical transmembrane segment at 233-253 (LHLSRACSILMLIAYLAYLFF) threads the bilayer. Topologically, residues 254 to 283 (QLNTHRQLFEPQQVEDDDDDDLVIAQDDEP) are cytoplasmic. A helical membrane pass occupies residues 284-304 (VLGFSSAMIWLALMTLLTALL). The Extracellular segment spans residues 305 to 327 (SGYVVSTIEAASESWELSVSFIS). Residues 328-348 (IILLPIVGNAAEHAGAVIFAL) traverse the membrane as a helical segment. Residues 335 to 370 (GNAAEHAGAVIFALKNKMDITLGVSLGSATQISMFV) form a cation selection region. Over 349–364 (KNKMDITLGVSLGSAT) the chain is Cytoplasmic. A helical membrane pass occupies residues 365 to 385 (QISMFVVPVSVIVAWTMGIPM). At 386 to 388 (DLD) the chain is on the extracellular side. Residues 389–409 (FNLLETGSLFLAILVTAFTLQ) traverse the membrane as a helical segment. Topologically, residues 410–414 (EGESH) are cytoplasmic. Residues 415 to 435 (YLKGLILVLCYAVISVCFFVI) form a helical membrane-spanning segment. Topologically, residues 436 to 453 (RRRSAGGTDGVHHLDVIV) are extracellular.

This sequence belongs to the Ca(2+):cation antiporter (CaCA) (TC 2.A.19) family. Cation/proton exchanger (CAX) subfamily. In terms of tissue distribution, expressed in embryo and roots.

The protein localises to the vacuole membrane. Its function is as follows. Vacuolar cation/proton exchanger (CAX). Translocates Ca(2+) and other metal ions into vacuoles using the proton gradient formed by H(+)-ATPase and H(+)-pyrophosphatase. This Oryza sativa subsp. japonica (Rice) protein is Vacuolar cation/proton exchanger 1b (CAX1b).